A 273-amino-acid polypeptide reads, in one-letter code: Putative phosphoenolpyruvate synthase regulatory protein (273 aa).

154–161 (GVSRSGKT) serves as a coordination point for ADP.

Belongs to the pyruvate, phosphate/water dikinase regulatory protein family. PSRP subfamily.

It carries out the reaction [pyruvate, water dikinase] + ADP = [pyruvate, water dikinase]-phosphate + AMP + H(+). The catalysed reaction is [pyruvate, water dikinase]-phosphate + phosphate + H(+) = [pyruvate, water dikinase] + diphosphate. In terms of biological role, bifunctional serine/threonine kinase and phosphorylase involved in the regulation of the phosphoenolpyruvate synthase (PEPS) by catalyzing its phosphorylation/dephosphorylation. The chain is Putative phosphoenolpyruvate synthase regulatory protein from Neisseria gonorrhoeae (strain ATCC 700825 / FA 1090).